Here is a 351-residue protein sequence, read N- to C-terminus: Glucan endo-1,3-beta-glucosidase (351 aa).

The signal sequence occupies residues 1–32 (MALWYLFNKRSLGAAVLILVGLLMCNIQITGA). Residue Gln-33 is modified to Pyrrolidone carboxylic acid. Residues Asn-79 and Asn-99 are each glycosylated (N-linked (GlcNAc...) asparagine). Glu-128 (proton donor) is an active-site residue. Asn-235 carries an N-linked (GlcNAc...) asparagine glycan. The active-site Nucleophile is Glu-268.

Belongs to the glycosyl hydrolase 17 family. Post-translationally, glycosylated. The N-terminus is blocked.

It is found in the secreted. It localises to the extracellular space. The protein localises to the extracellular matrix. It carries out the reaction Hydrolysis of (1-&gt;3)-beta-D-glucosidic linkages in (1-&gt;3)-beta-D-glucans.. In terms of biological role, implicated in the defense of plants against pathogens. The sequence is that of Glucan endo-1,3-beta-glucosidase (SP41B) from Nicotiana tabacum (Common tobacco).